A 536-amino-acid polypeptide reads, in one-letter code: Ribulokinase (536 aa).

The protein belongs to the ribulokinase family.

It carries out the reaction D-ribulose + ATP = D-ribulose 5-phosphate + ADP + H(+). The enzyme catalyses L-ribulose + ATP = L-ribulose 5-phosphate + ADP + H(+). The protein operates within carbohydrate degradation; L-arabinose degradation via L-ribulose; D-xylulose 5-phosphate from L-arabinose (bacterial route): step 2/3. The polypeptide is Ribulokinase (Staphylococcus epidermidis (strain ATCC 35984 / DSM 28319 / BCRC 17069 / CCUG 31568 / BM 3577 / RP62A)).